Reading from the N-terminus, the 442-residue chain is MEAKTSGPKQIQPSTPAPPPSTRRPRVREVSSRFMSPVTSSSSSAGDLHSLTCNSPKQHHLQHHQIQRSVSAQRLRRQLKMADGDENRSSETAARSLDSPFTLSQSRKSSKPSHLKPLNENSHRLETPTPMVPPPPSRSRLSQQRLPTATRLLQLSGISACYEKEGIINIQEKPKSNGSDQFPTLSCRTHLKVFNNPVPSSLNRSVSSPSSSCNVRESSSFSRLGLPLPPMAPKVPADTKKQRKVTEQLEDVHSLKLLHNRYLQWRFANANAQVKTQTHKTQTETMIHSFGSKISELHDSVQRKRIELQRLLKTKALLAITESQTPCLEQWSAIEEEYSTSVSQTIQAFSNASLRLPLDGDIMVDSKQLGDGLVAASKIVDGITQNVGNYMPKAKEMESLLSELTRVARSERSLTENCVVALLKTQASQVLNLSLHKLKNVL.

2 disordered regions span residues 1–144 and 221–240; these read MEAK…LSQQ and FSRL…ADTK. Residues 57–66 are compositionally biased toward basic residues; that stretch reads KQHHLQHHQI. The span at 80-89 shows a compositional bias: basic and acidic residues; it reads KMADGDENRS. The QWRF motif motif lies at 264–267; sequence QWRF.

This sequence belongs to the QWRF family.

This is QWRF motif-containing protein 6 (QWRF6) from Arabidopsis thaliana (Mouse-ear cress).